A 268-amino-acid chain; its full sequence is L-gamma-glutamyl-L-propargylglycine hydroxylase (268 aa).

The cofactor is Fe(2+).

The enzyme catalyses L-gamma-glutamyl-L-propargylglycine + 2-oxoglutarate + O2 = L-gamma-glutamyl-(3R)-L-beta-ethynylserine + succinate + CO2. The protein operates within amino-acid metabolism. It participates in antibiotic biosynthesis. Involved in the biosynthesis of terminal alkyne-containing amino acids such as L-beta-ethynylserine, that are produced as antibiotics by S.cattleya. Catalyzes the hydroxylation of the dipeptide L-gamma-glutamyl-L-propargylglycine, leading to L-gamma-glutamyl-L-beta-ethynylserine. Cannot use L-propargylglycine as substrate. The protein is L-gamma-glutamyl-L-propargylglycine hydroxylase of Streptantibioticus cattleyicolor (strain ATCC 35852 / DSM 46488 / JCM 4925 / NBRC 14057 / NRRL 8057) (Streptomyces cattleya).